Here is a 498-residue protein sequence, read N- to C-terminus: UDP-N-acetylmuramoylalanine--D-glutamate ligase (498 aa).

119-125 (GTNGKST) contacts ATP.

This sequence belongs to the MurCDEF family.

It localises to the cytoplasm. It carries out the reaction UDP-N-acetyl-alpha-D-muramoyl-L-alanine + D-glutamate + ATP = UDP-N-acetyl-alpha-D-muramoyl-L-alanyl-D-glutamate + ADP + phosphate + H(+). The protein operates within cell wall biogenesis; peptidoglycan biosynthesis. Functionally, cell wall formation. Catalyzes the addition of glutamate to the nucleotide precursor UDP-N-acetylmuramoyl-L-alanine (UMA). The polypeptide is UDP-N-acetylmuramoylalanine--D-glutamate ligase (Wolbachia sp. subsp. Brugia malayi (strain TRS)).